The chain runs to 577 residues: Proline--tRNA ligase (577 aa).

Belongs to the class-II aminoacyl-tRNA synthetase family. ProS type 1 subfamily. As to quaternary structure, homodimer.

The protein localises to the cytoplasm. It carries out the reaction tRNA(Pro) + L-proline + ATP = L-prolyl-tRNA(Pro) + AMP + diphosphate. In terms of biological role, catalyzes the attachment of proline to tRNA(Pro) in a two-step reaction: proline is first activated by ATP to form Pro-AMP and then transferred to the acceptor end of tRNA(Pro). As ProRS can inadvertently accommodate and process non-cognate amino acids such as alanine and cysteine, to avoid such errors it has two additional distinct editing activities against alanine. One activity is designated as 'pretransfer' editing and involves the tRNA(Pro)-independent hydrolysis of activated Ala-AMP. The other activity is designated 'posttransfer' editing and involves deacylation of mischarged Ala-tRNA(Pro). The misacylated Cys-tRNA(Pro) is not edited by ProRS. The sequence is that of Proline--tRNA ligase from Marinobacter nauticus (strain ATCC 700491 / DSM 11845 / VT8) (Marinobacter aquaeolei).